The following is a 185-amino-acid chain: Ribosome-recycling factor (185 aa).

The protein belongs to the RRF family.

It localises to the cytoplasm. Responsible for the release of ribosomes from messenger RNA at the termination of protein biosynthesis. May increase the efficiency of translation by recycling ribosomes from one round of translation to another. In Chromobacterium violaceum (strain ATCC 12472 / DSM 30191 / JCM 1249 / CCUG 213 / NBRC 12614 / NCIMB 9131 / NCTC 9757 / MK), this protein is Ribosome-recycling factor.